We begin with the raw amino-acid sequence, 427 residues long: Trigger factor (427 aa).

The PPIase FKBP-type domain maps to 163-248 (GDTVVIDFVG…IHEVKAKEVP (86 aa)).

Belongs to the FKBP-type PPIase family. Tig subfamily.

The protein resides in the cytoplasm. The enzyme catalyses [protein]-peptidylproline (omega=180) = [protein]-peptidylproline (omega=0). Functionally, involved in protein export. Acts as a chaperone by maintaining the newly synthesized protein in an open conformation. Functions as a peptidyl-prolyl cis-trans isomerase. The polypeptide is Trigger factor (Streptococcus suis (strain 05ZYH33)).